The chain runs to 318 residues: Guanidinopropionase (318 aa).

6 residues coordinate Mn(2+): histidine 126, aspartate 148, histidine 150, aspartate 152, aspartate 240, and aspartate 242.

The protein belongs to the arginase family. Agmatinase subfamily. In terms of assembly, homohexamer. Mn(2+) serves as cofactor.

The catalysed reaction is 3-guanidinopropanoate + H2O = urea + beta-alanine. Functionally, catalyzes the hydrolysis of 3-guanidinopropanoate to beta-alanine and urea. Possesses low activity against 4-guanidinobutanoate. Has no activity against arginine and agmatine. The sequence is that of Guanidinopropionase (gpuA) from Pseudomonas aeruginosa (strain ATCC 15692 / DSM 22644 / CIP 104116 / JCM 14847 / LMG 12228 / 1C / PRS 101 / PAO1).